The chain runs to 90 residues: Small ribosomal subunit protein uS15c (90 aa).

It belongs to the universal ribosomal protein uS15 family. As to quaternary structure, part of the 30S ribosomal subunit.

The protein localises to the plastid. The protein resides in the chloroplast. This is Small ribosomal subunit protein uS15c (rps15-A) from Zea mays (Maize).